A 399-amino-acid polypeptide reads, in one-letter code: Phosphoglycerate kinase (399 aa).

Substrate contacts are provided by residues 21–23 (DFN), R37, 60–63 (HLGR), R119, and R152. ATP contacts are provided by residues K205, G296, E327, and 353 to 356 (GGDT).

It belongs to the phosphoglycerate kinase family. Monomer.

The protein resides in the cytoplasm. The enzyme catalyses (2R)-3-phosphoglycerate + ATP = (2R)-3-phospho-glyceroyl phosphate + ADP. It participates in carbohydrate degradation; glycolysis; pyruvate from D-glyceraldehyde 3-phosphate: step 2/5. The chain is Phosphoglycerate kinase from Sulfurimonas denitrificans (strain ATCC 33889 / DSM 1251) (Thiomicrospira denitrificans (strain ATCC 33889 / DSM 1251)).